The chain runs to 249 residues: CDP-diacylglycerol pyrophosphatase (249 aa).

Residues 5-25 (GYFLLAVIVIVAAAGVGYWKF) traverse the membrane as a helical segment.

Belongs to the Cdh family.

The protein localises to the cell inner membrane. The enzyme catalyses a CDP-1,2-diacyl-sn-glycerol + H2O = a 1,2-diacyl-sn-glycero-3-phosphate + CMP + 2 H(+). Its pathway is phospholipid metabolism; CDP-diacylglycerol degradation; phosphatidate from CDP-diacylglycerol: step 1/1. The sequence is that of CDP-diacylglycerol pyrophosphatase from Salmonella arizonae (strain ATCC BAA-731 / CDC346-86 / RSK2980).